We begin with the raw amino-acid sequence, 312 residues long: tRNA pseudouridine synthase B (312 aa).

The Nucleophile role is filled by Asp-46. Substrate-binding residues include Tyr-74, Tyr-177, and Leu-198.

It belongs to the pseudouridine synthase TruB family. Type 1 subfamily.

It carries out the reaction uridine(55) in tRNA = pseudouridine(55) in tRNA. In terms of biological role, responsible for synthesis of pseudouridine from uracil-55 in the psi GC loop of transfer RNAs. This chain is tRNA pseudouridine synthase B, found in Buchnera aphidicola subsp. Acyrthosiphon pisum (strain APS) (Acyrthosiphon pisum symbiotic bacterium).